Here is a 428-residue protein sequence, read N- to C-terminus: Dihydroorotase (428 aa).

Positions 59 and 61 each coordinate Zn(2+). Residues 61 to 63 (HLR) and N93 each bind substrate. Zn(2+) contacts are provided by D151, H178, and H231. A substrate-binding site is contributed by N277. Residue D304 participates in Zn(2+) binding. Residue D304 is part of the active site. Substrate-binding positions include H308 and 322-323 (FG).

It belongs to the metallo-dependent hydrolases superfamily. DHOase family. Class I DHOase subfamily. Zn(2+) is required as a cofactor.

It catalyses the reaction (S)-dihydroorotate + H2O = N-carbamoyl-L-aspartate + H(+). It participates in pyrimidine metabolism; UMP biosynthesis via de novo pathway; (S)-dihydroorotate from bicarbonate: step 3/3. Its function is as follows. Catalyzes the reversible cyclization of carbamoyl aspartate to dihydroorotate. This is Dihydroorotase from Bacillus cytotoxicus (strain DSM 22905 / CIP 110041 / 391-98 / NVH 391-98).